We begin with the raw amino-acid sequence, 645 residues long: COP9 signalosome complex subunit 10 (645 aa).

The segment covering 1-45 (MSDEDNNYDDFMLSDDEGMESIEMEEETDDEDKQNIEINEDNSQD) has biased composition (acidic residues). Residues 1–63 (MSDEDNNYDD…HKQHEQGTFE (63 aa)) are disordered. Residues 46–63 (DQDRGAARHKQHEQGTFE) are compositionally biased toward basic and acidic residues. The region spanning 348-543 (DLSFALMRYY…DLVYFGDENK (196 aa)) is the PCI domain.

As to quaternary structure, component of a COP9 signalosome-like (CSN) complex, composed of at least RRI1/CSN5, CSN9, RRI2/CSN10, PCI8/CSN11, CSN12 and CSI1. In the complex, it probably interacts directly with CSN12.

It localises to the cytoplasm. Its subcellular location is the nucleus. Component of the COP9 signalosome (CSN) complex that acts as an regulator of the ubiquitin (Ubl) conjugation pathway by mediating the deneddylation of the cullin subunit of SCF-type E3 ubiquitin-protein ligase complexes. The CSN complex is involved in the regulation of the mating pheromone response. The protein is COP9 signalosome complex subunit 10 (RRI2) of Saccharomyces cerevisiae (strain ATCC 204508 / S288c) (Baker's yeast).